Here is a 747-residue protein sequence, read N- to C-terminus: Asparagine synthetase [glutamine-hydrolyzing] 2 (747 aa).

Residue cysteine 2 is the For GATase activity of the active site. Residues cysteine 2–threonine 218 enclose the Glutamine amidotransferase type-2 domain. Residues arginine 52–leucine 56, asparagine 77–glutamate 79, and aspartate 100 contribute to the L-glutamine site. Serine 395–proline 396 is an ATP binding site.

It belongs to the asparagine synthetase family.

It catalyses the reaction L-aspartate + L-glutamine + ATP + H2O = L-asparagine + L-glutamate + AMP + diphosphate + H(+). Its pathway is amino-acid biosynthesis; L-asparagine biosynthesis; L-asparagine from L-aspartate (L-Gln route): step 1/1. This Bacillus subtilis (strain 168) protein is Asparagine synthetase [glutamine-hydrolyzing] 2 (asnH).